A 537-amino-acid chain; its full sequence is Cytochrome bd ubiquinol oxidase subunit 1 (537 aa).

Over 1-24 (MISESVVDLSRLQFAMTALYHFLF) the chain is Cytoplasmic. H21 provides a ligand contact to heme b. The chain crosses the membrane as a helical span at residues 25–44 (VPLTLGMTFLLAIMESVYVM). The Periplasmic portion of the chain corresponds to 45-96 (TGKQVYKDMVKFWGKLFGINFALGVTTGITMEFQFGTNWAYYSHYVGDIFGA). A helical transmembrane segment spans residues 97–116 (PLAIEGLTAFFLESTFIGMF). The Cytoplasmic segment spans residues 117–131 (FFGWDRLSKIQHLAV). The chain crosses the membrane as a helical span at residues 132–151 (TWLVALGSNLSALWILVANG). Topologically, residues 152-189 (WMQHPVGAEFNFETMRMELVDFGALLLNPVAQVKFVHT) are periplasmic. Residue H188 coordinates heme b. A helical transmembrane segment spans residues 190-209 (VASGYVTGAVFVLAISSYYL). Topologically, residues 210–221 (LKKRDLGFARRS) are cytoplasmic. Residues 222–241 (FAIASAFGMASILSVIVLGD) traverse the membrane as a helical segment. At 242-394 (ESGYEVGEVQ…VASMFWSFRA (153 aa)) the chain is on the periplasmic side. Residue M395 coordinates heme b. A helical transmembrane segment spans residues 395 to 414 (MVGAGFAMLILFVCAFWASA). Over 415-472 (RKNEESKPWLLKFALYSLPLPWIATQTGWFVAEHGRQPWTIGGVLPTHLSASSLSTGD) the chain is Cytoplasmic. Residues 473–492 (LWGSLIALIAFYTLLLVVEM) form a helical membrane-spanning segment. Topologically, residues 493 to 537 (YLMIRFARLGPSSLHTGRYHFEQLEQHAVKHASPSQADPQQPVNA) are periplasmic.

The protein belongs to the cytochrome ubiquinol oxidase subunit 1 family. In terms of assembly, heterodimer of subunits I and II. It depends on heme b as a cofactor. Requires heme d cis-diol as cofactor.

The protein resides in the cell inner membrane. The catalysed reaction is 2 a ubiquinol + O2(in) + 4 H(+)(in) = 2 a ubiquinone + 2 H2O(in) + 4 H(+)(out). May be involved in maintaining the low intracellular oxygen concentration required for nitrogen fixation. In Azotobacter vinelandii, this protein is Cytochrome bd ubiquinol oxidase subunit 1 (cydA).